The following is a 379-amino-acid chain: Transcription factor TIP2 (379 aa).

The tract at residues 144–184 (MVGPFESSPTPRSGGGRKRSRATAGFHGGGPANGVEKKEKQ) is disordered. Positions 173 to 186 (GPANGVEKKEKQRR) are basic motif; degenerate. Positions 173 to 222 (GPANGVEKKEKQRRLRLTEKYNALMLLIPNRTKEDRATVISDAIEYIQEL) constitute a bHLH domain. A helix-loop-helix motif region spans residues 187 to 222 (LRLTEKYNALMLLIPNRTKEDRATVISDAIEYIQEL).

Belongs to the bHLH protein family. As to quaternary structure, homodimer. Interacts with TDR, but not with EAT1. As to expression, highly expressed in anthers; strong expression in the middle layer and tapetum, and weak expression in the endothecium.

Its subcellular location is the nucleus. In terms of biological role, transcription factor that binds to the E-box-containing promoter regions of the transcription factors TDR and EAT1, activating their expression. May have a role in specifying the cell pattern of the inner anther walls and functioning in meiosis progression. Required for male reproduction. Acts downstream of UDT1 and GAMYB, but upstream of TDR1 and EAT1 in pollen development. This is Transcription factor TIP2 (TIP2) from Oryza sativa subsp. japonica (Rice).